Here is a 500-residue protein sequence, read N- to C-terminus: MVNASGDPVIEAAHIWSDTLTVLKHSASLSPREKGWLEGVVPEGVFGSTIVLCVDNNDTLQAIQGDLNDSLLQALRTVTGENMFPAFKVVPKTEPEPLSEAKPAQPYPSEISPTVAEFGKESYGAKPAAAPREPMPATEPQFPVGQQKMNRDPETHLNKNFTFDSFVPGDSNRFARTVALAVAEGSGQDFNPLCIYGGSGLGKTHLLNAIGNYALVKDPGLKVRYVTSEEFTNEFIDALQNPNQSQGQIAEFNRRYRQVDVLLIDDIQFLGGKEATLDQFFHTFNALHQANKRIVIASDVAPKNLKGFEARLISRFESGLTVDVKPPDLETRIAILRMIASMNGSKIPSDVLDLIAERFTENIRELEGALTRVTAVASLSNQPVTRALAEQTLQDFFTTDVEIKPTDIISQVAKYFHLTFEDLVGKSRTKNVAVPRQIAMYLAREMTSMSLMDIGQVFGGRDHTTVMHACTRISDRMQQKQEIYNYVMELTVRLKQSNTN.

The tract at residues 1-81 (MVNASGDPVI…LQALRTVTGE (81 aa)) is domain I, interacts with DnaA modulators. The interval 81–155 (ENMFPAFKVV…QQKMNRDPET (75 aa)) is domain II. Residues 156 to 377 (HLNKNFTFDS…GALTRVTAVA (222 aa)) form a domain III, AAA+ region region. 4 residues coordinate ATP: Gly-200, Gly-202, Lys-203, and Thr-204. The interval 378-500 (SLSNQPVTRA…TVRLKQSNTN (123 aa)) is domain IV, binds dsDNA.

Belongs to the DnaA family. As to quaternary structure, oligomerizes as a right-handed, spiral filament on DNA at oriC.

It is found in the cytoplasm. Functionally, plays an essential role in the initiation and regulation of chromosomal replication. ATP-DnaA binds to the origin of replication (oriC) to initiate formation of the DNA replication initiation complex once per cell cycle. Binds the DnaA box (a 9 base pair repeat at the origin) and separates the double-stranded (ds)DNA. Forms a right-handed helical filament on oriC DNA; dsDNA binds to the exterior of the filament while single-stranded (ss)DNA is stabiized in the filament's interior. The ATP-DnaA-oriC complex binds and stabilizes one strand of the AT-rich DNA unwinding element (DUE), permitting loading of DNA polymerase. After initiation quickly degrades to an ADP-DnaA complex that is not apt for DNA replication. Binds acidic phospholipids. The protein is Chromosomal replication initiator protein DnaA of Bifidobacterium longum (strain DJO10A).